Reading from the N-terminus, the 341-residue chain is MAPPPGVGPASLRFAAAASWLVVRRRRVEHFPKVVEFLQSLRAAAPGLVCYRHHERLCMSLKAKVVVELILQARPWDQVLNALKHHFPAESRTTKEDRKLLEARENFCLLVKHLSEDPPSSLQELEQDYGESFLVAMEKLLFEYLCQLEKALPPVRAQELQDALSWSQPGSFITSSVALHQYGMDMGWTFPESSTSGSGNLIEPMEESPHQQTRPAFHSPLPKAKLGPHQPASLEHPEHLAGHRFNLAPLGKRKSRSHWTSAKACHKERPTVMLLPFRNMGLPAQDLSNPKSREEPGAASAASVGTEPVCTEEAKTPSRPLGKRALEETPPDSPAASRRTV.

N-acetylalanine is present on Ala2. Residues 243 to 265 (HRFNLAPLGKRKSRSHWTSAKAC) carry the TBM motif. The Nuclear localization signal motif lies at 249-255 (PLGKRKS). The tract at residues 283 to 341 (PAQDLSNPKSREEPGAASAASVGTEPVCTEEAKTPSRPLGKRALEETPPDSPAASRRTV) is disordered.

In terms of assembly, monomer. Found in a complex with POT1; TERF1 and TNKS1. Component of the shelterin complex (telosome) composed of TERF1, TERF2, TINF2, TERF2IP, ACD and POT1. Interacts with TERF1.

The protein localises to the nucleus. It localises to the chromosome. It is found in the telomere. Component of the shelterin complex (telosome) that is involved in the regulation of telomere length and protection. Shelterin associates with arrays of double-stranded TTAGGG repeats added by telomerase and protects chromosome ends; without its protective activity, telomeres are no longer hidden from the DNA damage surveillance and chromosome ends are inappropriately processed by DNA repair pathways. Plays a role in shelterin complex assembly. The sequence is that of TERF1-interacting nuclear factor 2 (Tinf2) from Mus musculus (Mouse).